We begin with the raw amino-acid sequence, 181 residues long: FMN reductase (NADH) RutF (181 aa).

Belongs to the non-flavoprotein flavin reductase family. RutF subfamily.

It carries out the reaction FMNH2 + NAD(+) = FMN + NADH + 2 H(+). Catalyzes the reduction of FMN to FMNH2 which is used to reduce pyrimidine by RutA via the Rut pathway. This chain is FMN reductase (NADH) RutF, found in Ancylobacter novellus (strain ATCC 8093 / DSM 506 / JCM 20403 / CCM 1077 / IAM 12100 / NBRC 12443 / NCIMB 10456) (Starkeya novella).